Here is a 299-residue protein sequence, read N- to C-terminus: Apolipoprotein E (299 aa).

Residues 1-18 (MKVLCTVLVVTLLAGCQA) form the signal peptide. Positions 74-245 (VLMEDTMKAV…RLEEVREQME (172 aa)) are 8 X 22 AA approximate tandem repeats. A run of 8 repeats spans residues 75-95 (LMEDTMKAVKAYKSELEQELV), 96-117 (PMAEDTKARLSKELQAAQARLG), 118-139 (ADMEEVRNRLAQYRSEMQAMLG), 140-161 (QSAEELRARLASHLRKLRKKLL), 162-183 (RDAEDLQKRLAVYKDGASEGAE), 184-206 (RSVSAVRERLESLVEQSRARAAL), 207-225 (TSQPLQERAQAWGKRLRGR), and 224-242 (GRLEEVGSQARDRLEEVRE). Position 137 is a methionine sulfoxide (Met137). At Ser141 the chain carries Phosphoserine. Residues 152 to 162 (HLRKLRKKLLR) are LDL and other lipoprotein receptors binding. 156–159 (LRKK) is a heparin binding site. The interval 205 to 273 (ALTSQPLQER…GWFEPMVEDM (69 aa)) is lipid-binding and lipoprotein association. 219–226 (GKRLRGRL) is a binding site for heparin. The tract at residues 261–273 (RLKGWFEPMVEDM) is specificity for association with VLDL.

The protein belongs to the apolipoprotein A1/A4/E family. As to quaternary structure, homotetramer. May interact with ABCA1; functionally associated with ABCA1 in the biogenesis of HDLs. May interact with APP/A4 amyloid-beta peptide; the interaction is extremely stable in vitro but its physiological significance is unclear. May interact with MAPT. May interact with MAP2. In the cerebrospinal fluid, interacts with secreted SORL1. Interacts with PMEL; this allows the loading of PMEL luminal fragment on ILVs to induce fibril nucleation. Post-translationally, APOE exists as multiple glycosylated and sialylated glycoforms within cells and in plasma. The extent of glycosylation and sialylation are tissue and context specific. Glycated in plasma VLDL. In terms of processing, phosphorylated by FAM20C in the extracellular medium.

It is found in the secreted. Its subcellular location is the extracellular space. The protein resides in the extracellular matrix. It localises to the extracellular vesicle. The protein localises to the endosome. It is found in the multivesicular body. In terms of biological role, APOE is an apolipoprotein, a protein associating with lipid particles, that mainly functions in lipoprotein-mediated lipid transport between organs via the plasma and interstitial fluids. APOE is a core component of plasma lipoproteins and is involved in their production, conversion and clearance. Apolipoproteins are amphipathic molecules that interact both with lipids of the lipoprotein particle core and the aqueous environment of the plasma. As such, APOE associates with chylomicrons, chylomicron remnants, very low density lipoproteins (VLDL) and intermediate density lipoproteins (IDL) but shows a preferential binding to high-density lipoproteins (HDL). It also binds a wide range of cellular receptors including the LDL receptor/LDLR, the LDL receptor-related proteins LRP1, LRP2 and LRP8 and the very low-density lipoprotein receptor/VLDLR that mediate the cellular uptake of the APOE-containing lipoprotein particles. Finally, APOE also has a heparin-binding activity and binds heparan-sulfate proteoglycans on the surface of cells, a property that supports the capture and the receptor-mediated uptake of APOE-containing lipoproteins by cells. A main function of APOE is to mediate lipoprotein clearance through the uptake of chylomicrons, VLDLs, and HDLs by hepatocytes. APOE is also involved in the biosynthesis by the liver of VLDLs as well as their uptake by peripheral tissues ensuring the delivery of triglycerides and energy storage in muscle, heart and adipose tissues. By participating in the lipoprotein-mediated distribution of lipids among tissues, APOE plays a critical role in plasma and tissues lipid homeostasis. APOE is also involved in two steps of reverse cholesterol transport, the HDLs-mediated transport of cholesterol from peripheral tissues to the liver, and thereby plays an important role in cholesterol homeostasis. First, it is functionally associated with ABCA1 in the biogenesis of HDLs in tissues. Second, it is enriched in circulating HDLs and mediates their uptake by hepatocytes. APOE also plays an important role in lipid transport in the central nervous system, regulating neuron survival and sprouting. This Ctenomys sociabilis (Social tuco-tuco) protein is Apolipoprotein E (APOE).